The following is a 174-amino-acid chain: Regenerating islet-derived protein 3-alpha (174 aa).

The first 25 residues, 1-25 (MLPRLSFNNVSWTLLYYLFIFQVRG), serve as a signal peptide directing secretion. Positions 26–36 (EDSQKAVPSTR) are excised as a propeptide. Cystine bridges form between cysteine 39–cysteine 50, cysteine 67–cysteine 170, and cysteine 145–cysteine 162. Positions 46–171 (YRSYCYTLVT…CDVELPFVCK (126 aa)) constitute a C-type lectin domain. A sufficient to activate EXTL3 region spans residues 102 to 117 (WIWLHDPTMGQQPNGG). Positions 106 and 120 each coordinate Zn(2+).

Forms a hexameric membrane-permeabilizing oligomeric pore on membrane phospholipids. The hexamer is formed by three dimers related by helical symmetry. Forms filaments, filamentation traps pore complexes and limits damage to host cells. Interacts with EXTL3. Post-translationally, proteolytic processing by trypsin removes an inhibitory N-terminal propeptide and is essential for peptidoglycan binding and antibacterial activity. In terms of tissue distribution, low expression found in healthy pancreas.

The protein localises to the secreted. Functionally, bactericidal C-type lectin. The lack of the EPN motif may explain its inability to bind peptidoglycan. Acts as a hormone in response to different stimuli like anti-inflammatory signals, such as IL17A, or gut microbiome. Secreted by different cell types to activate its receptor EXTL3 and induce cell specific signaling pathways. Induced by IL17A in keratinocytes, regulates keratinocyte proliferation and differentiation after skin injury via activation of EXTL3-PI3K-AKT signaling pathway. In parallel, inhibits skin inflammation through the inhibition of inflammatory cytokines such as IL6 and TNF. In pancreas, is able to permealize beta-cells membrane and stimulate their proliferation. This Rattus norvegicus (Rat) protein is Regenerating islet-derived protein 3-alpha (Reg3a).